The sequence spans 228 residues: tRNA (guanine-N(1)-)-methyltransferase (228 aa).

S-adenosyl-L-methionine contacts are provided by residues glycine 111 and 130–135 (IGDFVL).

This sequence belongs to the RNA methyltransferase TrmD family. As to quaternary structure, homodimer.

It is found in the cytoplasm. It catalyses the reaction guanosine(37) in tRNA + S-adenosyl-L-methionine = N(1)-methylguanosine(37) in tRNA + S-adenosyl-L-homocysteine + H(+). In terms of biological role, specifically methylates guanosine-37 in various tRNAs. This chain is tRNA (guanine-N(1)-)-methyltransferase, found in Ureaplasma urealyticum serovar 10 (strain ATCC 33699 / Western).